The sequence spans 498 residues: Mitogen-activated protein kinase 15 (498 aa).

The Protein kinase domain occupies 13 to 304 (YKIEEVIGKG…AEEALADPYF (292 aa)). Residues 19-27 (IGKGSYGVV) and K42 contribute to the ATP site. Residue D139 is the Proton acceptor of the active site. The residue at position 175 (T175) is a Phosphothreonine. Residues 175 to 177 (TDY) carry the TXY motif. The residue at position 177 (Y177) is a Phosphotyrosine. Disordered stretches follow at residues 388–411 (STAAPPERQHNSLPRPSVLYSDDR) and 470–498 (STAEQYEHRRTDRNPALATNTVSPRGSYP). Residues 486-498 (LATNTVSPRGSYP) show a composition bias toward polar residues.

Belongs to the protein kinase superfamily. CMGC Ser/Thr protein kinase family. MAP kinase subfamily. Dually phosphorylated on Thr-175 and Tyr-177, which activates the enzyme.

The enzyme catalyses L-seryl-[protein] + ATP = O-phospho-L-seryl-[protein] + ADP + H(+). It carries out the reaction L-threonyl-[protein] + ATP = O-phospho-L-threonyl-[protein] + ADP + H(+). Activated by threonine and tyrosine phosphorylation. This chain is Mitogen-activated protein kinase 15 (MPK15), found in Oryza sativa subsp. japonica (Rice).